A 102-amino-acid polypeptide reads, in one-letter code: Protein translation factor SUI1 homolog (102 aa).

It belongs to the SUI1 family.

The chain is Protein translation factor SUI1 homolog from Methanosarcina mazei (strain ATCC BAA-159 / DSM 3647 / Goe1 / Go1 / JCM 11833 / OCM 88) (Methanosarcina frisia).